The chain runs to 824 residues: Protein-glutamine gamma-glutamyltransferase K (824 aa).

The segment covering 1–10 (MEGPRSDVGR) has biased composition (basic and acidic residues). Disordered regions lie at residues 1 to 44 (MEGP…GGRS) and 61 to 110 (DDWG…AAGD). Position 20 is a phosphothreonine (T20). Residues S22, S70, S92, S100, and S103 each carry the phosphoserine modification. The span at 65–76 (PEPSGSRSRGTS) shows a compositional bias: low complexity. Basic and acidic residues predominate over residues 85–100 (GDSRGRDSRGGRRPES). Catalysis depends on residues C385, H444, and D467. 4 residues coordinate Ca(2+): N507, D509, E556, and E561. Positions 801 to 824 (RGFSEAVGDSRSGENIPMAFRGGA) are disordered. S812 bears the Phosphoserine mark.

It belongs to the transglutaminase superfamily. Transglutaminase family. Interacts with PLAAT4. Ca(2+) serves as cofactor. Palmitoylated. Post-translationally, the membrane anchorage region possesses a cluster of five cysteines within which fatty acid(s) may become thioester-linked. It is subject to phorbol ester-stimulated phosphorylation and is hypersensitive to proteolysis, which releases the enzyme in a soluble form. In terms of processing, tyrosine-phosphorylated.

It localises to the membrane. The enzyme catalyses L-glutaminyl-[protein] + L-lysyl-[protein] = [protein]-L-lysyl-N(6)-5-L-glutamyl-[protein] + NH4(+). Its function is as follows. Catalyzes the cross-linking of proteins and the conjugation of polyamines to proteins. Responsible for cross-linking epidermal proteins during formation of the stratum corneum. Involved in cell proliferation. The sequence is that of Protein-glutamine gamma-glutamyltransferase K (Tgm1) from Rattus norvegicus (Rat).